The primary structure comprises 209 residues: Transmembrane domain-containing protein TMIGD3 (209 aa).

Positions 1 to 15 (MEFLLLLSLALFSDA) are cleaved as a signal peptide. Residues 152-172 (SILIICILITSLGIIFIISHL) traverse the membrane as a helical segment. Positions 179 to 201 (QRNREVTGKSISRNPQASQGPSM) are disordered. Polar residues predominate over residues 187–201 (KSISRNPQASQGPSM).

It is found in the membrane. The polypeptide is Transmembrane domain-containing protein TMIGD3 (Tmigd3) (Mus musculus (Mouse)).